We begin with the raw amino-acid sequence, 149 residues long: Transcriptional repressor NrdR (149 aa).

A zinc finger lies at 3 to 34 (CPFCSATDTKVIDSRLVADGHQVRRRRECAEC). One can recognise an ATP-cone domain in the interval 49–139 (PRVVKQDGSR…VYRAFEDVSE (91 aa)).

This sequence belongs to the NrdR family. It depends on Zn(2+) as a cofactor.

Negatively regulates transcription of bacterial ribonucleotide reductase nrd genes and operons by binding to NrdR-boxes. The chain is Transcriptional repressor NrdR from Shewanella sediminis (strain HAW-EB3).